A 233-amino-acid polypeptide reads, in one-letter code: Nickel import system ATP-binding protein NikE (233 aa).

In terms of domain architecture, ABC transporter spans 2–228; the sequence is IELKHVTFGY…DRHPYTKELV (227 aa). ATP is bound at residue 35–42; the sequence is GESGCGKS.

It belongs to the ABC transporter superfamily. As to quaternary structure, the complex is composed of two ATP-binding proteins (NikD and NikE), two transmembrane proteins (NikB and NikC) and a solute-binding protein (NikA).

The protein resides in the cell membrane. The catalysed reaction is Ni(2+)(out) + ATP + H2O = Ni(2+)(in) + ADP + phosphate + H(+). In terms of biological role, part of the ABC transporter complex NikABCDE (Opp2) involved in nickel import. Probably responsible for energy coupling to the transport system. This chain is Nickel import system ATP-binding protein NikE, found in Staphylococcus aureus (strain MSSA476).